Here is a 70-residue protein sequence, read N- to C-terminus: Large ribosomal subunit protein eL38 (70 aa).

It belongs to the eukaryotic ribosomal protein eL38 family.

The protein is Large ribosomal subunit protein eL38 (RpL38) of Spodoptera frugiperda (Fall armyworm).